We begin with the raw amino-acid sequence, 683 residues long: Protein hook (683 aa).

Positions 5-123 constitute a Calponin-homology (CH) domain; sequence NGMYYSLLEW…RLLQLVLGCA (119 aa). 2 coiled-coil regions span residues 135–440 and 484–594; these read EIMC…LKCG and QTAL…AKEV.

Belongs to the hook family. In terms of assembly, homodimer. Interacts with microtubules via its N-terminus.

The protein resides in the cytoplasm. Its subcellular location is the cytoskeleton. It localises to the endosome. It is found in the synapse. Involved in endocytic trafficking by stabilizing organelles of the endocytic pathway. Probably acts as a cytoskeletal linker protein required to tether endosome vesicles to the cytoskeleton. Involved in modulation of endocytosis at stages required for down-regulation of membrane proteins that control synapse size. Not involved in synaptic vesicle recycling. Required in R7 cells for boss endocytosis into multivesicular bodies (MVBs). Has a role in regulating adult longevity. The protein is Protein hook of Drosophila grimshawi (Hawaiian fruit fly).